Consider the following 430-residue polypeptide: tRNA(Ile)-lysidine synthase (430 aa).

21-26 (SGGLDS) serves as a coordination point for ATP.

It belongs to the tRNA(Ile)-lysidine synthase family.

The protein localises to the cytoplasm. It carries out the reaction cytidine(34) in tRNA(Ile2) + L-lysine + ATP = lysidine(34) in tRNA(Ile2) + AMP + diphosphate + H(+). Its function is as follows. Ligates lysine onto the cytidine present at position 34 of the AUA codon-specific tRNA(Ile) that contains the anticodon CAU, in an ATP-dependent manner. Cytidine is converted to lysidine, thus changing the amino acid specificity of the tRNA from methionine to isoleucine. This chain is tRNA(Ile)-lysidine synthase, found in Salmonella paratyphi A (strain ATCC 9150 / SARB42).